Reading from the N-terminus, the 293-residue chain is Ribosomal protein L11 methyltransferase (293 aa).

Thr145, Gly166, Asp188, and Asn230 together coordinate S-adenosyl-L-methionine.

This sequence belongs to the methyltransferase superfamily. PrmA family.

The protein localises to the cytoplasm. The catalysed reaction is L-lysyl-[protein] + 3 S-adenosyl-L-methionine = N(6),N(6),N(6)-trimethyl-L-lysyl-[protein] + 3 S-adenosyl-L-homocysteine + 3 H(+). In terms of biological role, methylates ribosomal protein L11. This chain is Ribosomal protein L11 methyltransferase, found in Actinobacillus pleuropneumoniae serotype 5b (strain L20).